The following is a 278-amino-acid chain: 4-diphosphocytidyl-2-C-methyl-D-erythritol kinase (278 aa).

Residue Lys9 is part of the active site. Residue 93–103 (PISAGLAGGSS) participates in ATP binding. The active site involves Asp135.

It belongs to the GHMP kinase family. IspE subfamily.

It carries out the reaction 4-CDP-2-C-methyl-D-erythritol + ATP = 4-CDP-2-C-methyl-D-erythritol 2-phosphate + ADP + H(+). Its pathway is isoprenoid biosynthesis; isopentenyl diphosphate biosynthesis via DXP pathway; isopentenyl diphosphate from 1-deoxy-D-xylulose 5-phosphate: step 3/6. Catalyzes the phosphorylation of the position 2 hydroxy group of 4-diphosphocytidyl-2C-methyl-D-erythritol. In Finegoldia magna (strain ATCC 29328 / DSM 20472 / WAL 2508) (Peptostreptococcus magnus), this protein is 4-diphosphocytidyl-2-C-methyl-D-erythritol kinase.